The sequence spans 128 residues: Small ribosomal subunit protein uS9 (128 aa).

The protein belongs to the universal ribosomal protein uS9 family. Part of the 30S ribosomal subunit. Contacts proteins S7 and S10.

Functionally, part of the top of the head of the 30S subunit. The C-terminal region penetrates the head emerging in the P-site where it contacts tRNA. The sequence is that of Small ribosomal subunit protein uS9 (rpsI) from Thermus thermophilus (strain ATCC BAA-163 / DSM 7039 / HB27).